Consider the following 343-residue polypeptide: MLPWLLLLICALPCEPAGISDVSLKTRPPGGWVMEGDKLVLICSVDRVTGNITYFWYRGALGFQLETKTQPSLTAEFEISDMKQSDADQYYCAANDGHDPIASELVSIHVRVPVSRPVLTFGDSGTQAVLGDLVELHCKALRGSPPIFYQFYHESIILGNSSAPSGGGASFNFSLTAEHSGNFSCEASNGQGAQRSEVVALNLTGLSLVPTENGISHLSLGLTGWLLGCLSPITMALIFCYWLKRKIGRQSEDPVRSPPQTVLQGSTYPKSPDSRQPEPLYENVNVVSGNEVYSLVYHTPQVLEPAAAQHVRTHGVSESFQVSSGLYSKPRINIAHMDYEDAM.

Residues 1–16 form the signal peptide; that stretch reads MLPWLLLLICALPCEP. 2 consecutive Ig-like C2-type domains span residues 17–109 and 117–200; these read AGIS…VSIH and PVLT…EVVA. At 17–219 the chain is on the extracellular side; it reads AGISDVSLKT…PTENGISHLS (203 aa). The N-linked (GlcNAc...) asparagine glycan is linked to asparagine 51. Residues cysteine 138 and cysteine 185 are joined by a disulfide bond. N-linked (GlcNAc...) asparagine glycosylation occurs at asparagine 202. A helical transmembrane segment spans residues 220–240; that stretch reads LGLTGWLLGCLSPITMALIFC. Residues 241 to 343 are Cytoplasmic-facing; that stretch reads YWLKRKIGRQ…IAHMDYEDAM (103 aa). The segment at 251–278 is disordered; sequence SEDPVRSPPQTVLQGSTYPKSPDSRQPE. Residues 258 to 269 show a composition bias toward polar residues; it reads PPQTVLQGSTYP. 3 consecutive short sequence motifs (ITIM motif) follow at residues 266 to 271, 279 to 284, and 291 to 296; these read STYPKS, PLYENV, and EVYSLV. Phosphotyrosine is present on tyrosine 281. At tyrosine 297 the chain carries Phosphotyrosine. Short sequence motifs (ITIM motif) lie at residues 325 to 330 and 337 to 342; these read GLYSKP and MDYEDA.

As to quaternary structure, interacts with ABL1. Interacts with GRB2 and SOS1. Interacts with SHIP-1/INPP5D. In terms of processing, phosphorylated on C-terminal region upon BCR ligation leading to recruitment of ABL1. As to expression, widely expressed. Expressed in B-cells at the various stages of differentiation.

Its subcellular location is the cell membrane. Functionally, may function as an activating coreceptor in B-cells. May function in B-cells activation and differentiation. In Mus musculus (Mouse), this protein is Fc receptor-like protein 1 (Fcrl1).